A 457-amino-acid chain; its full sequence is UDP-N-acetylmuramoylalanine--D-glutamate ligase (457 aa).

Residue 117–123 (GTNGKST) participates in ATP binding.

This sequence belongs to the MurCDEF family.

Its subcellular location is the cytoplasm. It catalyses the reaction UDP-N-acetyl-alpha-D-muramoyl-L-alanine + D-glutamate + ATP = UDP-N-acetyl-alpha-D-muramoyl-L-alanyl-D-glutamate + ADP + phosphate + H(+). The protein operates within cell wall biogenesis; peptidoglycan biosynthesis. Functionally, cell wall formation. Catalyzes the addition of glutamate to the nucleotide precursor UDP-N-acetylmuramoyl-L-alanine (UMA). The chain is UDP-N-acetylmuramoylalanine--D-glutamate ligase from Paramagnetospirillum magneticum (strain ATCC 700264 / AMB-1) (Magnetospirillum magneticum).